Consider the following 247-residue polypeptide: Probable transcriptional regulatory protein YebC (247 aa).

The disordered stretch occupies residues 1-20 (MAGHSKWANTRHRKAAQDAK).

The protein belongs to the TACO1 family.

It is found in the cytoplasm. This is Probable transcriptional regulatory protein YebC from Salmonella arizonae (strain ATCC BAA-731 / CDC346-86 / RSK2980).